The following is a 475-amino-acid chain: 23S rRNA (uracil(1939)-C(5))-methyltransferase RlmD (475 aa).

In terms of domain architecture, TRAM spans Met1–Glu76. [4Fe-4S] cluster is bound by residues Cys89, Cys95, Cys98, and Cys178. 6 residues coordinate S-adenosyl-L-methionine: Gln299, Phe328, Asn333, Glu349, Asp377, and Asp398. The active-site Nucleophile is Cys431.

Belongs to the class I-like SAM-binding methyltransferase superfamily. RNA M5U methyltransferase family. RlmD subfamily.

It carries out the reaction uridine(1939) in 23S rRNA + S-adenosyl-L-methionine = 5-methyluridine(1939) in 23S rRNA + S-adenosyl-L-homocysteine + H(+). Its function is as follows. Catalyzes the formation of 5-methyl-uridine at position 1939 (m5U1939) in 23S rRNA. The protein is 23S rRNA (uracil(1939)-C(5))-methyltransferase RlmD of Polynucleobacter necessarius subsp. necessarius (strain STIR1).